A 616-amino-acid polypeptide reads, in one-letter code: Chaperone protein HscA (616 aa).

It belongs to the heat shock protein 70 family.

Its function is as follows. Chaperone involved in the maturation of iron-sulfur cluster-containing proteins. Has a low intrinsic ATPase activity which is markedly stimulated by HscB. Involved in the maturation of IscU. The protein is Chaperone protein HscA of Pectobacterium atrosepticum (strain SCRI 1043 / ATCC BAA-672) (Erwinia carotovora subsp. atroseptica).